A 184-amino-acid chain; its full sequence is Effector CFEM1 (184 aa).

Residues 1-17 form the signal peptide; that stretch reads MKYSVAFVALAAVAAQA. A CFEM domain is found at 18 to 112; that stretch reads QSLADVPKCA…PTTTAAATST (95 aa). 4 cysteine pairs are disulfide-bonded: Cys26–Cys68, Cys30–Cys63, Cys41–Cys48, and Cys50–Cys85. Asp45 contributes to the heme binding site. Disordered stretches follow at residues 83–106 and 136–163; these read NLCK…PTTT and IIPT…EQAN. Positions 88-103 are enriched in basic and acidic residues; sequence PPKESEAKSTAEEEKP. The GPI-anchor amidated asparagine moiety is linked to residue Asn163. Positions 164–184 are cleaved as a propeptide — removed in mature form; sequence GAAGLKGLGALAMAAFAALAL.

It belongs to the RBT5 family. As to quaternary structure, interacts with Z.mays LRR5; the interaction is direct. Interacts (via CFEM domain) with Z.mays WAK17 isoform 2; the interaction is direct.

The protein localises to the secreted. It is found in the cell wall. It localises to the cell membrane. The protein resides in the cell septum. Its subcellular location is the cytoplasm. Functionally, suppresses host programmed cell death during infection by binding to Z.mays WAK17 isoform 2 and Z.mays LRR5, to prevent activation of Z.mays WAK17 isoform 1 and the downstream hypersensitive response. The polypeptide is Effector CFEM1 (Gibberella zeae (strain ATCC MYA-4620 / CBS 123657 / FGSC 9075 / NRRL 31084 / PH-1) (Wheat head blight fungus)).